We begin with the raw amino-acid sequence, 438 residues long: Chromosomal replication initiator protein DnaA (438 aa).

Residues 1-74 (MNEINKIWQK…SFYQITGSQV (74 aa)) are domain I, interacts with DnaA modulators. The domain II stretch occupies residues 74-100 (VEVKYIITGKEHETGLIEEKKQVIKKG). Residues 101 to 317 (NLNPKYTFDT…GSLIKLCAYT (217 aa)) are domain III, AAA+ region. The ATP site is built by G145, G147, K148, and T149. The domain IV, binds dsDNA stretch occupies residues 318–438 (SLTKVPISMD…DSIIKKVTGQ (121 aa)).

This sequence belongs to the DnaA family. In terms of assembly, oligomerizes as a right-handed, spiral filament on DNA at oriC.

It is found in the cytoplasm. Plays an essential role in the initiation and regulation of chromosomal replication. ATP-DnaA binds to the origin of replication (oriC) to initiate formation of the DNA replication initiation complex once per cell cycle. Binds the DnaA box (a 9 base pair repeat at the origin) and separates the double-stranded (ds)DNA. Forms a right-handed helical filament on oriC DNA; dsDNA binds to the exterior of the filament while single-stranded (ss)DNA is stabiized in the filament's interior. The ATP-DnaA-oriC complex binds and stabilizes one strand of the AT-rich DNA unwinding element (DUE), permitting loading of DNA polymerase. After initiation quickly degrades to an ADP-DnaA complex that is not apt for DNA replication. Binds acidic phospholipids. This is Chromosomal replication initiator protein DnaA from Thermodesulfovibrio yellowstonii (strain ATCC 51303 / DSM 11347 / YP87).